The chain runs to 255 residues: 4-diphosphocytidyl-2-C-methyl-D-erythritol kinase (255 aa).

Lys-6 is a catalytic residue. Residue 95–105 (PVCAGLGGGSS) participates in ATP binding. Asp-137 is an active-site residue.

Belongs to the GHMP kinase family. IspE subfamily.

The enzyme catalyses 4-CDP-2-C-methyl-D-erythritol + ATP = 4-CDP-2-C-methyl-D-erythritol 2-phosphate + ADP + H(+). Its pathway is isoprenoid biosynthesis; isopentenyl diphosphate biosynthesis via DXP pathway; isopentenyl diphosphate from 1-deoxy-D-xylulose 5-phosphate: step 3/6. Functionally, catalyzes the phosphorylation of the position 2 hydroxy group of 4-diphosphocytidyl-2C-methyl-D-erythritol. This is 4-diphosphocytidyl-2-C-methyl-D-erythritol kinase from Campylobacter jejuni subsp. jejuni serotype O:6 (strain 81116 / NCTC 11828).